The following is a 160-amino-acid chain: uncharacterized protein (160 aa).

A signal peptide spans 1 to 25; the sequence is MKVTLLLLLIAVLLLLLIFMKVCKQ.

This is an uncharacterized protein from Invertebrate iridescent virus 6 (IIV-6).